A 358-amino-acid chain; its full sequence is Oligopeptide transport ATP-binding protein OppD (358 aa).

An ABC transporter domain is found at 8 to 259; it reads LEVKDLAISF…PRHPYTWGLL (252 aa). 44 to 51 lines the ATP pocket; that stretch reads GESGSGKS.

It belongs to the ABC transporter superfamily. The complex is composed of two ATP-binding proteins (OppD and OppF), two transmembrane proteins (OppB and OppC) and a solute-binding protein (OppA).

Its subcellular location is the cell membrane. The catalysed reaction is a [peptide](out) + ATP + H2O = a [peptide](in) + ADP + phosphate + H(+). Part of the ABC transporter complex OppABCDF involved in the uptake of oligopeptides. Probably responsible for energy coupling to the transport system. Required for sporulation and genetic competence. In Bacillus subtilis (strain 168), this protein is Oligopeptide transport ATP-binding protein OppD.